Consider the following 621-residue polypeptide: DnaJ homolog subfamily C member 2 (621 aa).

Residue Met-1 is modified to N-acetylmethionine. Phosphoserine is present on residues Ser-47, Ser-49, Ser-60, and Ser-63. Residues 88–161 enclose the J domain; the sequence is DHYAVLGLGH…VKRRAFNSVD (74 aa). A ZRF1-UBD region spans residues 160 to 250; that stretch reads VDPTFDNSVP…RDERRWIEKQ (91 aa). The residue at position 183 (Ser-183) is a Phosphoserine. Disordered stretches follow at residues 294 to 315 and 426 to 453; these read EKKA…QRQA and KEEA…GSKH. SANT domains are found at residues 449–511 and 549–604; these read NGSK…KLDP and TDFT…EMVK.

In terms of assembly, component of ribosome-associated complex (RAC), a heterodimer composed of Hsp70/DnaK-type chaperone HSPA14 and Hsp40/DnaJ-type chaperone DNAJC2. Interacts (via ZRF1-UBD region) with ID1. In terms of processing, phosphorylated in M (mitotic) phase.

The protein resides in the nucleus. It localises to the cytoplasm. It is found in the cytosol. In terms of biological role, acts both as a chaperone in the cytosol and as a chromatin regulator in the nucleus. When cytosolic, acts as a molecular chaperone: component of the ribosome-associated complex (RAC), a complex involved in folding or maintaining nascent polypeptides in a folding-competent state. In the RAC complex, stimulates the ATPase activity of the ribosome-associated pool of Hsp70-type chaperones HSPA14 that bind to the nascent polypeptide chain. When nuclear, mediates the switching from polycomb-repressed genes to an active state: specifically recruited at histone H2A ubiquitinated at 'Lys-119' (H2AK119ub), and promotes the displacement of the polycomb PRC1 complex from chromatin, thereby facilitating transcription activation. The protein is DnaJ homolog subfamily C member 2 (DNAJC2) of Bos taurus (Bovine).